We begin with the raw amino-acid sequence, 66 residues long: DNA-directed RNA polymerase subunit Rpo10 (66 aa).

Zn(2+)-binding residues include Cys-7, Cys-10, Cys-47, and Cys-48.

The protein belongs to the archaeal Rpo10/eukaryotic RPB10 RNA polymerase subunit family. Part of the RNA polymerase complex. The cofactor is Zn(2+).

The protein resides in the cytoplasm. The enzyme catalyses RNA(n) + a ribonucleoside 5'-triphosphate = RNA(n+1) + diphosphate. Its function is as follows. DNA-dependent RNA polymerase (RNAP) catalyzes the transcription of DNA into RNA using the four ribonucleoside triphosphates as substrates. This Haloarcula marismortui (strain ATCC 43049 / DSM 3752 / JCM 8966 / VKM B-1809) (Halobacterium marismortui) protein is DNA-directed RNA polymerase subunit Rpo10.